The primary structure comprises 316 residues: Delta(1)-pyrroline-2-carboxylate reductase (316 aa).

The protein belongs to the ornithine cyclodeaminase/mu-crystallin family.

The catalysed reaction is L-proline + NAD(+) = 1-pyrroline-2-carboxylate + NADH + H(+). It carries out the reaction L-proline + NADP(+) = 1-pyrroline-2-carboxylate + NADPH + H(+). Catalyzes the reduction of Delta(1)-pyrroline-2-carboxylate (Pyr2C) to L-proline, using preferentially NADPH over NADH as the electron donor. Is likely involved in a degradation pathway that converts trans-3-hydroxy-L-proline (t3LHyp) to L-proline, which would allow P.denitrificans to grow on t3LHyp as a sole carbon source. The sequence is that of Delta(1)-pyrroline-2-carboxylate reductase from Paracoccus denitrificans (strain Pd 1222).